A 398-amino-acid polypeptide reads, in one-letter code: Cell adhesion molecule 3 (398 aa).

A signal peptide spans 1–24; it reads MGAPAASLLLLLLLFACCWAPGGA. The Ig-like V-type domain occupies 25–126; the sequence is NLSQDDSQPW…VRTAKSLVTV (102 aa). The Extracellular portion of the chain corresponds to 25–330; it reads NLSQDDSQPW…PVPSSSSTYH (306 aa). 3 disulfides stabilise this stretch: cysteine 50-cysteine 110, cysteine 152-cysteine 209, and cysteine 254-cysteine 299. Ig-like C2-type domains lie at 130-228 and 233-315; these read PQKP…QRIE and PTAM…YTLN. N-linked (GlcNAc...) asparagine glycosylation occurs at asparagine 290. The helical transmembrane segment at 331 to 351 threads the bilayer; it reads AIIGGIVAFIVFLLLIMLIFL. Over 352 to 398 the chain is Cytoplasmic; sequence GHYLIRHKGTYLTHEAKGSDDAPDADTAIINAEGGQSGGDDKKEYFI. The interval 367-398 is disordered; the sequence is AKGSDDAPDADTAIINAEGGQSGGDDKKEYFI. A Phosphoserine modification is found at serine 388.

The protein belongs to the nectin family. Homodimer. Can form trans-heterodimers with NECTIN3. Interacts with EPB41L1, DLG3, PALS2 and CASK. As to expression, isoform 1 is expressed mainly in adult and fetal brain. Isoform 2 is highly expressed in adult brain and weakly expressed in placenta. In brain, Isoform 2 is highly expressed in cerebellum.

The protein localises to the cell membrane. The protein resides in the cell junction. Functionally, involved in cell-cell adhesion. Has both calcium-independent homophilic cell-cell adhesion activity and calcium-independent heterophilic cell-cell adhesion activity with IGSF4, NECTIN1 and NECTIN3. Interaction with EPB41L1 may regulate structure or function of cell-cell junctions. The polypeptide is Cell adhesion molecule 3 (CADM3) (Homo sapiens (Human)).